A 981-amino-acid polypeptide reads, in one-letter code: NAD(+) hydrolase tir-1 (981 aa).

3 disordered regions span residues 1-31 (MLPN…RSLK), 74-128 (QNEQ…PTQP), and 173-225 (LSTP…PVDQ). 2 stretches are compositionally biased toward polar residues: residues 12 to 23 (PSFQSLNNNNQR) and 74 to 85 (QNEQDGETTSTD). Positions 87 to 97 (AFFELDDDDDL) are enriched in acidic residues. Over residues 98 to 114 (SSPSVPGSPVDPPSISV) the composition is skewed to low complexity. Residues 115 to 128 (PLPPKSAPPCPTQP) are compositionally biased toward pro residues. Residues 182–200 (EEMHNGQVRKESEYRRFKS) are compositionally biased toward basic and acidic residues. SAM domains follow at residues 614–678 (WTCA…LKVA) and 684–750 (VDES…AKHP). Residues 760–857 (KQIDVFISYR…EHQKNIIPIF (98 aa)) enclose the TIR domain. 769 to 770 (RR) lines the NAD(+) pocket. E842 is a catalytic residue. 3 stretches are compositionally biased toward polar residues: residues 908–939 (TTPT…TGPS), 954–963 (FTPTGSQERA), and 972–981 (PSASTTSDRN). The interval 908–981 (TTPTTKEMPS…PSASTTSDRN (74 aa)) is disordered.

This sequence belongs to the SARM1 family. Homodimer. Interacts with rab-1, pal-1 and unc-43. Highly expressed in hypodermis. Localizes to postsynaptic regions of axons.

The protein localises to the cytoplasm. The catalysed reaction is NAD(+) + H2O = ADP-D-ribose + nicotinamide + H(+). Its function is as follows. NAD(+) hydrolase, which plays a key role in non-apoptotic cell death by regulating NAD(+) metabolism. In response to stress, homooligomerizes and catalyzes cleavage of NAD(+) into ADP-D-ribose (ADPR) and nicotinamide; NAD(+) cleavage promoting non-apoptotic neuronal cell death. In males, involved in non-apoptotic death of the linker cell which guides gonad elongation during larval development. Required for both innate immune response and specification of AWC(OFF) neuron. During late embryogenesis, it acts downstream of CAMKII (unc-43) to regulate specification of asymmetric odorant receptors in AWC(OFF) neuron via the nsy-1/ASK1 pmk-1/p38 MAP kinase signaling cascade. Required to localize nsy-1 to postsynaptic regions of AWC neuron, suggesting that it may act by assembling a signaling complex that regulate odorant receptor expression. Also plays a central role in resistance to infection to a broad range of bacterial and fungi pathogens, possibly by activating pmk-1, independently of the NF-kappa-B pathway. Required for expression of antimicrobial peptides nlp-29 and nlp-31. Its role in immune response and neuron specification may be mediated by the same nsy-1/ASK1 pmk-1/p38 MAP kinase cascade signaling pathway. Involved in the response to anoxic conditions probably by activating the p38 pathway composed of nsy-1/sek-1/pmk-1. Involved in regulation of the serotonergic response of ADF neurons to pathogenic food. In addition, plays a role in the up-regulation of gcs-1 upon arsenite treatment, most likely through activation of pmk-1, to confer protection against toxicity induced by heavy metals. In terms of biological role, regulates expression of antimicrobial peptide nlp-29 in response to fungal infection or physical injury. In Caenorhabditis elegans, this protein is NAD(+) hydrolase tir-1.